The sequence spans 362 residues: C-C chemokine receptor type 10 (362 aa).

Residues 1-48 (MGTKPTEQVSWGLYSGYDEEAYSVGPLPELCYKADVQAFSRAFQPSVS) are Extracellular-facing. The chain crosses the membrane as a helical span at residues 49–69 (LMVAVLGLAGNGLVLATHLAA). The Cytoplasmic segment spans residues 70-80 (RRTTRSPTSVH). The chain crosses the membrane as a helical span at residues 81–101 (LLQLALADLLLALTLPFAAAG). Over 102–115 (ALQGWNLGSTTCRA) the chain is Extracellular. An intrachain disulfide couples C113 to C191. A helical transmembrane segment spans residues 116–136 (ISGLYSASFHAGFLFLACISA). Topologically, residues 137–159 (DRYVAIARALPAGQRPSTPSRAH) are cytoplasmic. A helical membrane pass occupies residues 160–180 (LVSVFVWLLSLFLALPALLFS). The Extracellular portion of the chain corresponds to 181–208 (RDGPREGQRRCRLIFPESLTQTVKGASA). Residues 209-229 (VAQVVLGFALPLGVMAACYAL) traverse the membrane as a helical segment. Topologically, residues 230 to 247 (LGRTLLAARGPERRRALR) are cytoplasmic. A helical transmembrane segment spans residues 248–268 (VVVALVVAFVVLQLPYSLALL). Residues 269-291 (LDTADLLAARERSCSSSKRKDLA) lie on the Extracellular side of the membrane. The chain crosses the membrane as a helical span at residues 292–312 (LLVTGGLTLVRCSLNPVLYAF). The Cytoplasmic segment spans residues 313–362 (LGLRFRRDLRRLLQGGGCSPKPNPRGRCPRRLRLSSCSAPTETHSLSWDN).

Belongs to the G-protein coupled receptor 1 family. Expressed at high levels in small intestine, colon, lymph nodes, Peyer patches and at lower levels in thymus, lung and spleen.

Its subcellular location is the cell membrane. Functionally, receptor for chemokines SCYA27 and SCYA28. Subsequently transduces a signal by increasing the intracellular calcium ions level. This Mus musculus (Mouse) protein is C-C chemokine receptor type 10 (Ccr10).